We begin with the raw amino-acid sequence, 99 residues long: Putative pterin-4-alpha-carbinolamine dehydratase (99 aa).

This sequence belongs to the pterin-4-alpha-carbinolamine dehydratase family.

The catalysed reaction is (4aS,6R)-4a-hydroxy-L-erythro-5,6,7,8-tetrahydrobiopterin = (6R)-L-erythro-6,7-dihydrobiopterin + H2O. In Bradyrhizobium sp. (strain BTAi1 / ATCC BAA-1182), this protein is Putative pterin-4-alpha-carbinolamine dehydratase.